Consider the following 314-residue polypeptide: 3'-5' exoribonuclease YhaM (314 aa).

A DNA-binding region (OB) is located at residues 14–90 (VDLYLLIKSS…QLKLRNIRPA (77 aa)). The 117-residue stretch at 163 to 279 (HVVSMLNLAK…LHYIDNLDAK (117 aa)) folds into the HD domain.

The protein belongs to the YhaM family.

Its function is as follows. Shows a 3'-5' exoribonuclease activity. The sequence is that of 3'-5' exoribonuclease YhaM from Bacillus licheniformis (strain ATCC 14580 / DSM 13 / JCM 2505 / CCUG 7422 / NBRC 12200 / NCIMB 9375 / NCTC 10341 / NRRL NRS-1264 / Gibson 46).